A 511-amino-acid polypeptide reads, in one-letter code: Putative polyol transporter 1 (511 aa).

12 consecutive transmembrane segments (helical) span residues 27–47 (FACAILASMTSIILGYDIGVM), 63–83 (VQLEILMGILNIYSLVGSGAA), 94–114 (YTIVLAGAFFFCGALLMGFAT), 124–144 (FVAGIGVGYAMMIAPVYTAEV), 151–171 (GFLTSFPEIFINIGILLGYVS), 186–206 (FMLGVGAVPSVFLAIGVLAMP), 284–304 (ILIACLGIHFAQQASGIDAVV), 324–344 (LATVAVGVVKTLFIVVGTCVV), 351–371 (ALLLTSMGGMFLSLTALGTSL), 384–404 (WAIGLAVTTVMTFVATFSIGA), 424–444 (GASLGVMLNRLMSGIIGMTFL), and 454–474 (GAFLLFAGVAAAAWVFFFTFL).

It belongs to the major facilitator superfamily. Sugar transporter (TC 2.A.1.1) family.

The protein localises to the membrane. Its function is as follows. Plasma membrane sugar-proton symporter. The chain is Putative polyol transporter 1 (PLT1) from Arabidopsis thaliana (Mouse-ear cress).